The sequence spans 376 residues: Riboflavin biosynthesis protein RibD (376 aa).

Residues Met1 to Asn150 are deaminase. Residues Glu6–Tyr128 form the CMP/dCMP-type deaminase domain. His55 contributes to the Zn(2+) binding site. Catalysis depends on Glu57, which acts as the Proton donor. Residues Cys80 and Cys89 each contribute to the Zn(2+) site. Residues Phe151–Asn376 form a reductase region. Position 159 (Ala159) interacts with NADP(+). Ser173 lines the substrate pocket. Trp175 contacts NADP(+). Arg189 provides a ligand contact to substrate. Thr201 and Asp205 together coordinate NADP(+). Positions 209 and 212 each coordinate substrate. Ser230 contacts NADP(+). Glu300 serves as a coordination point for substrate. An NADP(+)-binding site is contributed by Gly302–Ser308.

This sequence in the N-terminal section; belongs to the cytidine and deoxycytidylate deaminase family. The protein in the C-terminal section; belongs to the HTP reductase family. Requires Zn(2+) as cofactor.

It carries out the reaction 2,5-diamino-6-hydroxy-4-(5-phosphoribosylamino)-pyrimidine + H2O + H(+) = 5-amino-6-(5-phospho-D-ribosylamino)uracil + NH4(+). It catalyses the reaction 5-amino-6-(5-phospho-D-ribitylamino)uracil + NADP(+) = 5-amino-6-(5-phospho-D-ribosylamino)uracil + NADPH + H(+). It functions in the pathway cofactor biosynthesis; riboflavin biosynthesis; 5-amino-6-(D-ribitylamino)uracil from GTP: step 2/4. It participates in cofactor biosynthesis; riboflavin biosynthesis; 5-amino-6-(D-ribitylamino)uracil from GTP: step 3/4. Its function is as follows. Converts 2,5-diamino-6-(ribosylamino)-4(3h)-pyrimidinone 5'-phosphate into 5-amino-6-(ribosylamino)-2,4(1h,3h)-pyrimidinedione 5'-phosphate. The sequence is that of Riboflavin biosynthesis protein RibD (ribD) from Chlamydia pneumoniae (Chlamydophila pneumoniae).